Here is a 200-residue protein sequence, read N- to C-terminus: 3-isopropylmalate dehydratase small subunit (200 aa).

The protein belongs to the LeuD family. LeuD type 1 subfamily. In terms of assembly, heterodimer of LeuC and LeuD.

The enzyme catalyses (2R,3S)-3-isopropylmalate = (2S)-2-isopropylmalate. The protein operates within amino-acid biosynthesis; L-leucine biosynthesis; L-leucine from 3-methyl-2-oxobutanoate: step 2/4. In terms of biological role, catalyzes the isomerization between 2-isopropylmalate and 3-isopropylmalate, via the formation of 2-isopropylmaleate. This Campylobacter jejuni (strain RM1221) protein is 3-isopropylmalate dehydratase small subunit.